The following is a 237-amino-acid chain: Pyridoxine 5'-phosphate synthase (237 aa).

The 3-amino-2-oxopropyl phosphate site is built by Asn-7 and Arg-18. His-43 (proton acceptor) is an active-site residue. Residues Arg-45 and His-50 each contribute to the 1-deoxy-D-xylulose 5-phosphate site. Glu-70 (proton acceptor) is an active-site residue. Thr-100 contacts 1-deoxy-D-xylulose 5-phosphate. His-190 functions as the Proton donor in the catalytic mechanism. Residues Asp-191 and 213–214 (GH) each bind 3-amino-2-oxopropyl phosphate.

Belongs to the PNP synthase family. As to quaternary structure, homooctamer; tetramer of dimers.

The protein localises to the cytoplasm. The enzyme catalyses 3-amino-2-oxopropyl phosphate + 1-deoxy-D-xylulose 5-phosphate = pyridoxine 5'-phosphate + phosphate + 2 H2O + H(+). Its pathway is cofactor biosynthesis; pyridoxine 5'-phosphate biosynthesis; pyridoxine 5'-phosphate from D-erythrose 4-phosphate: step 5/5. Its function is as follows. Catalyzes the complicated ring closure reaction between the two acyclic compounds 1-deoxy-D-xylulose-5-phosphate (DXP) and 3-amino-2-oxopropyl phosphate (1-amino-acetone-3-phosphate or AAP) to form pyridoxine 5'-phosphate (PNP) and inorganic phosphate. This Bacteroides thetaiotaomicron (strain ATCC 29148 / DSM 2079 / JCM 5827 / CCUG 10774 / NCTC 10582 / VPI-5482 / E50) protein is Pyridoxine 5'-phosphate synthase.